A 234-amino-acid chain; its full sequence is Uridylate kinase (234 aa).

ATP is bound by residues 8–11 (KLSG), Gly-51, and Arg-55. UMP is bound by residues Asp-68 and 129-136 (TSNPFFTT). Residues Thr-156, Tyr-162, and Asp-165 each coordinate ATP.

It belongs to the UMP kinase family. In terms of assembly, homohexamer.

The protein localises to the cytoplasm. It carries out the reaction UMP + ATP = UDP + ADP. It functions in the pathway pyrimidine metabolism; CTP biosynthesis via de novo pathway; UDP from UMP (UMPK route): step 1/1. Its activity is regulated as follows. Inhibited by UTP. Functionally, catalyzes the reversible phosphorylation of UMP to UDP. In Fervidobacterium nodosum (strain ATCC 35602 / DSM 5306 / Rt17-B1), this protein is Uridylate kinase.